The sequence spans 341 residues: Alpha-1,4-N-acetylglucosaminyltransferase (341 aa).

At 1 to 4 (MLKE) the chain is on the cytoplasmic side. The helical; Signal-anchor for type II membrane protein transmembrane segment at 5–25 (IYLSLSLVLVFACGLLYQLTM) threads the bilayer. At 26–341 (RSQCFFACLP…VSKKPGTGSR (316 aa)) the chain is on the lumenal side. Residue asparagine 100 is glycosylated (N-linked (GlcNAc...) asparagine). Positions 168–170 (DTD) match the DXD motif motif.

This sequence belongs to the glycosyltransferase 32 family.

It localises to the golgi apparatus membrane. It participates in protein modification; protein glycosylation. Its function is as follows. Catalyzes the transfer of N-acetylglucosamine (GlcNAc) to core 2 branched O-glycans. Necessary for the synthesis of type III mucin which is specifically produced in the stomach, duodenum, and pancreatic duct. May protect against inflammation-associated gastric adenocarcinoma. The chain is Alpha-1,4-N-acetylglucosaminyltransferase from Mus musculus (Mouse).